The primary structure comprises 182 residues: Adenine phosphoribosyltransferase (182 aa).

It belongs to the purine/pyrimidine phosphoribosyltransferase family. As to quaternary structure, homodimer.

The protein localises to the cytoplasm. The enzyme catalyses AMP + diphosphate = 5-phospho-alpha-D-ribose 1-diphosphate + adenine. It functions in the pathway purine metabolism; AMP biosynthesis via salvage pathway; AMP from adenine: step 1/1. Its function is as follows. Catalyzes a salvage reaction resulting in the formation of AMP, that is energically less costly than de novo synthesis. In Campylobacter jejuni subsp. jejuni serotype O:2 (strain ATCC 700819 / NCTC 11168), this protein is Adenine phosphoribosyltransferase.